The primary structure comprises 408 residues: Aminomethyltransferase, mitochondrial (408 aa).

Residues 1–30 (MRGGGLWQLGQSVTRRLAQAEKKVIARRCF) constitute a mitochondrion transit peptide. Positions 235, 266, and 404 each coordinate substrate.

This sequence belongs to the GcvT family. As to quaternary structure, the glycine cleavage system is composed of four proteins: P, T, L and H.

The protein resides in the mitochondrion. It catalyses the reaction N(6)-[(R)-S(8)-aminomethyldihydrolipoyl]-L-lysyl-[protein] + (6S)-5,6,7,8-tetrahydrofolate = N(6)-[(R)-dihydrolipoyl]-L-lysyl-[protein] + (6R)-5,10-methylene-5,6,7,8-tetrahydrofolate + NH4(+). Its function is as follows. The glycine cleavage system catalyzes the degradation of glycine. The chain is Aminomethyltransferase, mitochondrial (GDCST) from Mesembryanthemum crystallinum (Common ice plant).